A 101-amino-acid polypeptide reads, in one-letter code: Apolipoprotein C-II (101 aa).

Positions 1–26 are cleaved as a signal peptide; sequence MGTRYFLALFLILLVLGFKVQGVAMA. Positions 66 to 74 are lipid binding; sequence TMDEKIRDI. Residues 78 to 101 are lipoprotein lipase cofactor; the sequence is STAAVTTYAGIFTDQLLSLLKGDQ.

It belongs to the apolipoprotein C2 family. Proapolipoprotein C-II is synthesized as a sialic acid containing glycoprotein which is subsequently desialylated prior to its proteolytic processing. In terms of processing, proapolipoprotein C-II undergoes proteolytic cleavage of its N-terminal hexapeptide to generate apolipoprotein C-II. In bovine, proapolipoprotein C-II was found to be the minor form whereas apolipoprotein C-II was found to be the major form in plasma.

It localises to the secreted. Functionally, component of chylomicrons, very low-density lipoproteins (VLDL), low-density lipoproteins (LDL), and high-density lipoproteins (HDL) in plasma. Plays an important role in lipoprotein metabolism as an activator of lipoprotein lipase. Both proapolipoprotein C-II and apolipoprotein C-II can activate lipoprotein lipase. The polypeptide is Apolipoprotein C-II (APOC2) (Camelus dromedarius (Dromedary)).